The primary structure comprises 285 residues: NAD kinase (285 aa).

The active-site Proton acceptor is the D64. NAD(+) is bound by residues 64-65 (DG), 138-139 (ND), R149, R166, D168, L176, 179-184 (SGYTIS), and Q238.

The protein belongs to the NAD kinase family. A divalent metal cation is required as a cofactor.

Its subcellular location is the cytoplasm. The enzyme catalyses NAD(+) + ATP = ADP + NADP(+) + H(+). Involved in the regulation of the intracellular balance of NAD and NADP, and is a key enzyme in the biosynthesis of NADP. Catalyzes specifically the phosphorylation on 2'-hydroxyl of the adenosine moiety of NAD to yield NADP. In Lawsonia intracellularis (strain PHE/MN1-00), this protein is NAD kinase.